A 1312-amino-acid polypeptide reads, in one-letter code: DNA repair protein RAD50.L (1312 aa).

ATP is bound by residues Arg-13, Asn-38, Gly-39, Gly-41, Lys-42, Thr-43, Thr-44, Val-67, Asp-69, and Gln-159. Residue Thr-43 participates in Mg(2+) binding. Gln-159 provides a ligand contact to Mg(2+). 3 coiled-coil regions span residues 203 to 342 (VREY…LNRE), 415 to 558 (LREF…IKSR), and 587 to 628 (INQT…FEEK). The region spanning 635–734 (SQDFDSDLSR…RKDDMMELKP (100 aa)) is the Zinc-hook domain. The Zn(2+) site is built by Cys-681 and Cys-684. Residues 712–1070 (LKSAEGELKR…ENKSESLKTN (359 aa)) adopt a coiled-coil conformation.

It belongs to the SMC family. RAD50 subfamily. In terms of assembly, component of the MRN complex composed of two heterodimers RAD50 and MRE11 associated with a single NBN. Zn(2+) serves as cofactor.

It localises to the nucleus. The protein localises to the chromosome. It is found in the telomere. The catalysed reaction is ATP + H2O = ADP + phosphate + H(+). Functionally, component of the MRN complex, which plays a central role in double-strand break (DSB) repair, DNA recombination, maintenance of telomere integrity and meiosis. The MRN complex is involved in the repair of DNA double-strand breaks (DSBs) via homologous recombination (HR), an error-free mechanism which primarily occurs during S and G2 phases. The complex (1) mediates the end resection of damaged DNA, which generates proper single-stranded DNA, a key initial steps in HR, and is (2) required for the recruitment of other repair factors and efficient activation of ATM and ATR upon DNA damage. The MRN complex possesses single-strand endonuclease activity and double-strand-specific 3'-5' exonuclease activity, which are provided by mre11, to initiate end resection, which is required for single-strand invasion and recombination. Within the complex, rad50 is both required to bind DNA ends and hold them in close proximity and regulate the activity of MRE11. Rad50 provides an ATP-dependent control of MRE11 by positioning DNA ends into the mre11 active site: ATP-binding induces a large structural change from an open form with accessible MRE11 nuclease sites into a closed form. The MRN complex is also required for DNA damage signaling via activation of the atm and atr kinases: the nuclease activity of mre11 is not required to activate ATM and ATR. The MRN complex promotes recruitment of topbp1 to DNA damage sites. The MRN complex and rbbp8/CtIP are also required for chromosome alignment during metaphase. The polypeptide is DNA repair protein RAD50.L (Xenopus laevis (African clawed frog)).